A 556-amino-acid chain; its full sequence is 2-succinyl-5-enolpyruvyl-6-hydroxy-3-cyclohexene-1-carboxylate synthase (556 aa).

Belongs to the TPP enzyme family. MenD subfamily. As to quaternary structure, homodimer. Requires Mg(2+) as cofactor. It depends on Mn(2+) as a cofactor. Thiamine diphosphate serves as cofactor.

The enzyme catalyses isochorismate + 2-oxoglutarate + H(+) = 5-enolpyruvoyl-6-hydroxy-2-succinyl-cyclohex-3-ene-1-carboxylate + CO2. The protein operates within quinol/quinone metabolism; 1,4-dihydroxy-2-naphthoate biosynthesis; 1,4-dihydroxy-2-naphthoate from chorismate: step 2/7. It functions in the pathway quinol/quinone metabolism; menaquinone biosynthesis. In terms of biological role, catalyzes the thiamine diphosphate-dependent decarboxylation of 2-oxoglutarate and the subsequent addition of the resulting succinic semialdehyde-thiamine pyrophosphate anion to isochorismate to yield 2-succinyl-5-enolpyruvyl-6-hydroxy-3-cyclohexene-1-carboxylate (SEPHCHC). The polypeptide is 2-succinyl-5-enolpyruvyl-6-hydroxy-3-cyclohexene-1-carboxylate synthase (Shigella boydii serotype 18 (strain CDC 3083-94 / BS512)).